Here is a 273-residue protein sequence, read N- to C-terminus: Nitrogenase iron protein 5 (273 aa).

8 to 15 (GKGGIGKS) provides a ligand contact to ATP. Cys94 is a [4Fe-4S] cluster binding site. Residue Arg97 is modified to ADP-ribosylarginine; by dinitrogenase reductase ADP-ribosyltransferase. Cys129 serves as a coordination point for [4Fe-4S] cluster.

The protein belongs to the NifH/BchL/ChlL family. Homodimer. The cofactor is [4Fe-4S] cluster. The reversible ADP-ribosylation of Arg-97 inactivates the nitrogenase reductase and regulates nitrogenase activity.

The enzyme catalyses N2 + 8 reduced [2Fe-2S]-[ferredoxin] + 16 ATP + 16 H2O = H2 + 8 oxidized [2Fe-2S]-[ferredoxin] + 2 NH4(+) + 16 ADP + 16 phosphate + 6 H(+). The key enzymatic reactions in nitrogen fixation are catalyzed by the nitrogenase complex, which has 2 components: the iron protein and the molybdenum-iron protein. This chain is Nitrogenase iron protein 5 (nifH5), found in Clostridium pasteurianum.